Consider the following 456-residue polypeptide: Enolase (456 aa).

Q164 contributes to the (2R)-2-phosphoglycerate binding site. The active-site Proton donor is E207. Positions 244, 287, and 314 each coordinate Mg(2+). K339, R368, S369, and K390 together coordinate (2R)-2-phosphoglycerate. Residue K339 is the Proton acceptor of the active site.

This sequence belongs to the enolase family. Component of the RNA degradosome, a multiprotein complex involved in RNA processing and mRNA degradation. It depends on Mg(2+) as a cofactor.

The protein localises to the cytoplasm. Its subcellular location is the secreted. The protein resides in the cell surface. It catalyses the reaction (2R)-2-phosphoglycerate = phosphoenolpyruvate + H2O. Its pathway is carbohydrate degradation; glycolysis; pyruvate from D-glyceraldehyde 3-phosphate: step 4/5. Its function is as follows. Catalyzes the reversible conversion of 2-phosphoglycerate (2-PG) into phosphoenolpyruvate (PEP). It is essential for the degradation of carbohydrates via glycolysis. This chain is Enolase, found in Francisella tularensis subsp. novicida (strain U112).